Consider the following 425-residue polypeptide: MSKTNESLMQRRVAAVPRGVGQIHPIFVDTAKNSTVIDVEGRELIDFAGGIAVLNTGHLHPKVVAAVQEQLTKVSHTCFQVLAYEPYVELCEKINKLVPGDFDKKTLLVTTGSEAVENAVKIARAATGRAGVIAFTGGYHGRTMMTLGLTGKVVPYSAGMGLMPGGIFRALFPSELHGISVDDAIASVERIFKNDAEPRDIAAIILEPVQGEGGFLPAPKELMKRLRALCDQHGILLIADEVQTGAGRTGTFFAMEQMGVAPDLTTFAKSIAGGFPLAGVCGKAEYMDAIAPGGLGGTYAGSPIACAAALAVIEVFEEEKLLDRSKAVGERLTAGLREIQKKYPIIGDVRGLGSMIAVEVFEKGTHTPNAAAVGQVVAKAREKGLILLSCGTYGNVLRILVPLTAEDALLDKGLAIIEECFAEIA.

Pyridoxal 5'-phosphate is bound by residues 112–113 (GS), Tyr139, and 240–243 (DEVQ). Residue Lys269 is modified to N6-(pyridoxal phosphate)lysine. Thr298 provides a ligand contact to pyridoxal 5'-phosphate.

It belongs to the class-III pyridoxal-phosphate-dependent aminotransferase family. Pyridoxal 5'-phosphate is required as a cofactor.

It catalyses the reaction 5-aminopentanoate + 2-oxoglutarate = 5-oxopentanoate + L-glutamate. Functionally, catalyzes the conversion of 5-aminovalerate to 5-oxopentanoate. The sequence is that of 5-aminovalerate aminotransferase DavT (davT) from Pseudomonas putida (strain ATCC 47054 / DSM 6125 / CFBP 8728 / NCIMB 11950 / KT2440).